A 130-amino-acid chain; its full sequence is Small ribosomal subunit protein uS8 (130 aa).

It belongs to the universal ribosomal protein uS8 family. Part of the 30S ribosomal subunit. Contacts proteins S5 and S12.

Functionally, one of the primary rRNA binding proteins, it binds directly to 16S rRNA central domain where it helps coordinate assembly of the platform of the 30S subunit. The polypeptide is Small ribosomal subunit protein uS8 (Photorhabdus laumondii subsp. laumondii (strain DSM 15139 / CIP 105565 / TT01) (Photorhabdus luminescens subsp. laumondii)).